A 588-amino-acid chain; its full sequence is Putative pentatricopeptide repeat-containing protein At5g52630 (588 aa).

PPR repeat units follow at residues 14-48 (NYNQICDLLLSSARTRSTIKGLQLHGYVVKSGLSL), 49-79 (IPLVANNLINFYSKSQLPFDSRRAFEDSPQK), 80-114 (SSTTWSSIISCFAQNELPWMSLEFLKKMMAGNLRP), 115-149 (DDHVLPSATKSCAILSRCDIGRSVHCLSMKTGYDA), 150-180 (DVFVGSSLVDMYAKCGEIVYARKMFDEMPQR), 181-215 (NVVTWSGMMYGYAQMGENEEALWLFKEALFENLAV), 216-250 (NDYSFSSVISVCANSTLLELGRQIHGLSIKSSFDS), 251-281 (SSFVGSSLVSLYSKCGVPEGAYQVFNEVPVK), 282-316 (NLGIWNAMLKAYAQHSHTQKVIELFKRMKLSGMKP), 317-351 (NFITFLNVLNACSHAGLVDEGRYYFDQMKESRIEP), and 352-386 (TDKHYASLVDMLGRAGRLQEALEVITNMPIDPTES). Residues 387 to 462 (VWGALLTSCT…ETGLSWVEER (76 aa)) are type E motif. A type E(+) motif region spans residues 463 to 493 (NKVHTFAAGERRHEKSKEIYEKLAELGEEME). Residues 494 to 588 (KAGYIADTSY…DGKCSCNDYW (95 aa)) are type DYW motif.

This sequence belongs to the PPR family. PCMP-H subfamily.

In Arabidopsis thaliana (Mouse-ear cress), this protein is Putative pentatricopeptide repeat-containing protein At5g52630 (PCMP-H52).